A 77-amino-acid polypeptide reads, in one-letter code: uncharacterized protein (77 aa).

2 stretches are compositionally biased toward basic and acidic residues: residues 1–24 and 37–58; these read CPVA…EDQR and EGPK…ERGP. Positions 1–77 are disordered; it reads CPVAEEHFLV…RHGPKRKPAK (77 aa). The segment covering 66–77 has biased composition (basic residues); sequence RPRHGPKRKPAK.

This is an uncharacterized protein from Macaca fascicularis (Crab-eating macaque).